Here is a 318-residue protein sequence, read N- to C-terminus: Probable metal transport system membrane protein CT_070 (318 aa).

10 helical membrane passes run 1–21, 39–59, 64–84, 94–114, 124–144, 170–190, 196–216, 226–246, 252–272, and 285–305; these read MVAS…LVFF, IQVI…TFLV, AMYA…VCLF, QALT…IHFI, ASTA…LVFL, IFLV…SFVC, IFAF…MLLL, AVGV…AKLI, EMMV…PALS, and TSGL…VFVC.

It belongs to the ABC-3 integral membrane protein family.

The protein localises to the cell inner membrane. Its function is as follows. Part of an ATP-driven transport system CT_067/CT_068/CT_069/CT_070 for a metal. The sequence is that of Probable metal transport system membrane protein CT_070 from Chlamydia trachomatis serovar D (strain ATCC VR-885 / DSM 19411 / UW-3/Cx).